The primary structure comprises 326 residues: 4-hydroxythreonine-4-phosphate dehydrogenase (326 aa).

Residues His-132 and Thr-133 each coordinate substrate. The a divalent metal cation site is built by His-163, His-208, and His-263. Residues Lys-271, Asn-280, and Arg-289 each contribute to the substrate site.

This sequence belongs to the PdxA family. As to quaternary structure, homodimer. It depends on Zn(2+) as a cofactor. Mg(2+) serves as cofactor. Requires Co(2+) as cofactor.

It is found in the cytoplasm. The enzyme catalyses 4-(phosphooxy)-L-threonine + NAD(+) = 3-amino-2-oxopropyl phosphate + CO2 + NADH. Its pathway is cofactor biosynthesis; pyridoxine 5'-phosphate biosynthesis; pyridoxine 5'-phosphate from D-erythrose 4-phosphate: step 4/5. Catalyzes the NAD(P)-dependent oxidation of 4-(phosphooxy)-L-threonine (HTP) into 2-amino-3-oxo-4-(phosphooxy)butyric acid which spontaneously decarboxylates to form 3-amino-2-oxopropyl phosphate (AHAP). This chain is 4-hydroxythreonine-4-phosphate dehydrogenase, found in Roseobacter denitrificans (strain ATCC 33942 / OCh 114) (Erythrobacter sp. (strain OCh 114)).